The chain runs to 487 residues: Glutamate--tRNA ligase (487 aa).

A 'HIGH' region motif is present at residues 10 to 20; the sequence is PSPTGYMHVGN. The short motif at 251-255 is the 'KMSKS' region element; it reads KLSKR. Lys-254 contributes to the ATP binding site.

Belongs to the class-I aminoacyl-tRNA synthetase family. Glutamate--tRNA ligase type 1 subfamily. In terms of assembly, monomer.

Its subcellular location is the cytoplasm. The enzyme catalyses tRNA(Glu) + L-glutamate + ATP = L-glutamyl-tRNA(Glu) + AMP + diphosphate. In terms of biological role, catalyzes the attachment of glutamate to tRNA(Glu) in a two-step reaction: glutamate is first activated by ATP to form Glu-AMP and then transferred to the acceptor end of tRNA(Glu). This Clostridium kluyveri (strain ATCC 8527 / DSM 555 / NBRC 12016 / NCIMB 10680 / K1) protein is Glutamate--tRNA ligase.